Here is a 293-residue protein sequence, read N- to C-terminus: Elongation factor Ts (293 aa).

The tract at residues 80-83 is involved in Mg(2+) ion dislocation from EF-Tu; that stretch reads TDFV.

Belongs to the EF-Ts family.

Its subcellular location is the cytoplasm. In terms of biological role, associates with the EF-Tu.GDP complex and induces the exchange of GDP to GTP. It remains bound to the aminoacyl-tRNA.EF-Tu.GTP complex up to the GTP hydrolysis stage on the ribosome. This chain is Elongation factor Ts, found in Paraburkholderia xenovorans (strain LB400).